The primary structure comprises 196 residues: Probable nicotinate-nucleotide adenylyltransferase (196 aa).

It belongs to the NadD family.

The catalysed reaction is nicotinate beta-D-ribonucleotide + ATP + H(+) = deamido-NAD(+) + diphosphate. It participates in cofactor biosynthesis; NAD(+) biosynthesis; deamido-NAD(+) from nicotinate D-ribonucleotide: step 1/1. Catalyzes the reversible adenylation of nicotinate mononucleotide (NaMN) to nicotinic acid adenine dinucleotide (NaAD). In Caldicellulosiruptor saccharolyticus (strain ATCC 43494 / DSM 8903 / Tp8T 6331), this protein is Probable nicotinate-nucleotide adenylyltransferase.